The chain runs to 94 residues: ATP synthase subunit c (94 aa).

Transmembrane regions (helical) follow at residues 15 to 35 (IGVGVILAAAGLGSAIGWGLI) and 58 to 78 (FIFAGLMESFPFIILAFAMWF).

The protein belongs to the ATPase C chain family. As to quaternary structure, F-type ATPases have 2 components, F(1) - the catalytic core - and F(0) - the membrane proton channel. F(1) has five subunits: alpha(3), beta(3), gamma(1), delta(1), epsilon(1). F(0) has three main subunits: a(1), b(2) and c(10-14). The alpha and beta chains form an alternating ring which encloses part of the gamma chain. F(1) is attached to F(0) by a central stalk formed by the gamma and epsilon chains, while a peripheral stalk is formed by the delta and b chains.

The protein resides in the cell inner membrane. In terms of biological role, f(1)F(0) ATP synthase produces ATP from ADP in the presence of a proton or sodium gradient. F-type ATPases consist of two structural domains, F(1) containing the extramembraneous catalytic core and F(0) containing the membrane proton channel, linked together by a central stalk and a peripheral stalk. During catalysis, ATP synthesis in the catalytic domain of F(1) is coupled via a rotary mechanism of the central stalk subunits to proton translocation. Key component of the F(0) channel; it plays a direct role in translocation across the membrane. A homomeric c-ring of between 10-14 subunits forms the central stalk rotor element with the F(1) delta and epsilon subunits. The polypeptide is ATP synthase subunit c (Hydrogenovibrio crunogenus (strain DSM 25203 / XCL-2) (Thiomicrospira crunogena)).